Consider the following 174-residue polypeptide: Male-enhanced antigen 1 (174 aa).

Disordered regions lie at residues 1-83 (MAAV…DGAA) and 95-123 (HLPDPPLESEDEDEEGAAALSSHSSIPMD). Composition is skewed to acidic residues over residues 38 to 48 (SSEEPEEEQEE), 65 to 82 (PEQEEVELAPVGEGEDGA), and 101 to 110 (LESEDEDEEG). S103 carries the phosphoserine modification.

Highly expressed in testis. Transcripts can be found in primary and secondary spermatocytes, and spermatids, but the protein itself is only detected in spermatids. No expression in Leydig cells, spermatogonia, or sperm. Very weak expression in the heart, kidney, spleen, thymus and ovary.

Its function is as follows. May play an important role in spermatogenesis and/or testis development. In Mus musculus (Mouse), this protein is Male-enhanced antigen 1 (Mea1).